The following is a 121-amino-acid chain: Small ribosomal subunit protein uS13 (121 aa).

Positions 93-121 (RGLPVRGQNTKNNARTRKGPRRTVANKKK) are disordered. The segment covering 106–121 (ARTRKGPRRTVANKKK) has biased composition (basic residues).

It belongs to the universal ribosomal protein uS13 family. As to quaternary structure, part of the 30S ribosomal subunit. Forms a loose heterodimer with protein S19. Forms two bridges to the 50S subunit in the 70S ribosome.

Its function is as follows. Located at the top of the head of the 30S subunit, it contacts several helices of the 16S rRNA. In the 70S ribosome it contacts the 23S rRNA (bridge B1a) and protein L5 of the 50S subunit (bridge B1b), connecting the 2 subunits; these bridges are implicated in subunit movement. Contacts the tRNAs in the A and P-sites. The chain is Small ribosomal subunit protein uS13 from Bacillus licheniformis (strain ATCC 14580 / DSM 13 / JCM 2505 / CCUG 7422 / NBRC 12200 / NCIMB 9375 / NCTC 10341 / NRRL NRS-1264 / Gibson 46).